The following is an 89-amino-acid chain: Small ribosomal subunit protein bS20 (89 aa).

The protein belongs to the bacterial ribosomal protein bS20 family.

Its function is as follows. Binds directly to 16S ribosomal RNA. This Wolbachia pipientis wMel protein is Small ribosomal subunit protein bS20.